Consider the following 214-residue polypeptide: MSLSTPLITDSVIQAAHWLKKGQLLAYPTESVWGIGCDPFNQQAVMQLLTIKQRPIEKGMIVVTDSPSRITVLLEGLDAVERQTVLDSWQTDSINGTAKQAHTWLLPISQKLLITIPSWITGAHDSVAVRVIDHPLVKQLCAQMVSASNPYGFVVSTSCNPAGQPPALSLSEAQRYFLRHHANSNECVGYLKGETLGYQLPSQIGDALTGQIIR.

Positions 9 to 214 (TDSVIQAAHW…GDALTGQIIR (206 aa)) constitute a YrdC-like domain.

It belongs to the SUA5 family. TsaC subfamily.

It localises to the cytoplasm. It carries out the reaction L-threonine + hydrogencarbonate + ATP = L-threonylcarbamoyladenylate + diphosphate + H2O. Required for the formation of a threonylcarbamoyl group on adenosine at position 37 (t(6)A37) in tRNAs that read codons beginning with adenine. Catalyzes the conversion of L-threonine, HCO(3)(-)/CO(2) and ATP to give threonylcarbamoyl-AMP (TC-AMP) as the acyladenylate intermediate, with the release of diphosphate. The sequence is that of Threonylcarbamoyl-AMP synthase from Psychrobacter arcticus (strain DSM 17307 / VKM B-2377 / 273-4).